Here is a 232-residue protein sequence, read N- to C-terminus: uncharacterized protein (232 aa).

The next 5 helical transmembrane spans lie at 69 to 91 (LISAIITMVLFSLLTPLMFYILF), 104 to 126 (FLEPTIYFILFLFGLHACIFFAL), 139 to 161 (FSRFGAFLIPFTAILILALFFFL), 166 to 188 (ICFTILAVGLIGAFFAIPPAMLS), and 200 to 219 (FIYSTIVIYLIICVTFQLII).

The protein localises to the cell membrane. This is an uncharacterized protein from Bacillus subtilis (strain 168).